Here is a 299-residue protein sequence, read N- to C-terminus: 4-diphosphocytidyl-2-C-methyl-D-erythritol kinase (299 aa).

The active site involves lysine 16. 97–107 (PVASGIGGGSA) contributes to the ATP binding site. Aspartate 140 is an active-site residue.

The protein belongs to the GHMP kinase family. IspE subfamily.

It catalyses the reaction 4-CDP-2-C-methyl-D-erythritol + ATP = 4-CDP-2-C-methyl-D-erythritol 2-phosphate + ADP + H(+). It participates in isoprenoid biosynthesis; isopentenyl diphosphate biosynthesis via DXP pathway; isopentenyl diphosphate from 1-deoxy-D-xylulose 5-phosphate: step 3/6. Its function is as follows. Catalyzes the phosphorylation of the position 2 hydroxy group of 4-diphosphocytidyl-2C-methyl-D-erythritol. This chain is 4-diphosphocytidyl-2-C-methyl-D-erythritol kinase, found in Roseobacter denitrificans (strain ATCC 33942 / OCh 114) (Erythrobacter sp. (strain OCh 114)).